The following is a 205-amino-acid chain: Ras-related protein RABD1 (205 aa).

N-acetylserine is present on serine 2. Residues 15-23 (GDSSVGKSC), 33-40 (YIDSYIST), 63-67 (DTAGQ), 121-124 (NKND), and 151-153 (SAK) contribute to the GTP site. Positions 37–45 (YISTIGVDF) match the Effector region motif. Composition is skewed to polar residues over residues 174–186 (GSQT…SGPG) and 194–205 (PIQQNNGGCCGQ). Residues 174–205 (GSQTNANKTSGPGTVQMKGQPIQQNNGGCCGQ) form a disordered region. S-geranylgeranyl cysteine attachment occurs at residues cysteine 202 and cysteine 203.

Belongs to the small GTPase superfamily. Rab family. As to quaternary structure, does not interact with GC5. Interacts with XI-2/MYA2.

The protein resides in the golgi apparatus. Its subcellular location is the trans-Golgi network membrane. It localises to the golgi apparatus membrane. Its function is as follows. Protein transport. Regulator of membrane traffic from the Golgi apparatus towards the endoplasmic reticulum (ER). This Arabidopsis thaliana (Mouse-ear cress) protein is Ras-related protein RABD1 (RABD1).